The sequence spans 333 residues: D-threonate 4-phosphate dehydrogenase (333 aa).

The substrate site is built by histidine 140 and threonine 141. A divalent metal cation-binding residues include histidine 170, histidine 214, and histidine 270. Lysine 278, asparagine 287, and arginine 296 together coordinate substrate.

The protein belongs to the PdxA family. PdxA2 subfamily. In terms of assembly, homodimer. Requires a divalent metal cation as cofactor.

It catalyses the reaction 4-O-phospho-D-threonate + NAD(+) = dihydroxyacetone phosphate + CO2 + NADH. Its function is as follows. Catalyzes the NAD-dependent oxidation and subsequent decarboxylation of D-threonate 4-phosphate to produce dihydroxyacetone phosphate (DHAP). Can also use 4-hydroxy-L-threonine 4-phosphate as substrate. The chain is D-threonate 4-phosphate dehydrogenase from Cupriavidus necator (strain ATCC 17699 / DSM 428 / KCTC 22496 / NCIMB 10442 / H16 / Stanier 337) (Ralstonia eutropha).